Here is an 809-residue protein sequence, read N- to C-terminus: LPS-assembly protein LptD (809 aa).

The N-terminal stretch at 1–22 (MRRALRLLPLPLSIAICLPAMA) is a signal peptide.

This sequence belongs to the LptD family. In terms of assembly, component of the lipopolysaccharide transport and assembly complex. Interacts with LptE and LptA.

The protein resides in the cell outer membrane. In terms of biological role, together with LptE, is involved in the assembly of lipopolysaccharide (LPS) at the surface of the outer membrane. This is LPS-assembly protein LptD from Xanthomonas campestris pv. campestris (strain 8004).